The primary structure comprises 287 residues: Ret finger protein-like 4A (287 aa).

An RING-type; degenerate zinc finger spans residues 11–53; sequence CPVCLKDLEEAVQLKCGYACCLQCLNSLQKEPDGEGLLCRFCS. The 199-residue stretch at 78–276 folds into the B30.2/SPRY domain; sequence EPKLKSVLTM…LSICSVINPS (199 aa).

As to quaternary structure, interacts with PSMB1, UBE2A and CCNB1.

It localises to the cytoplasm. Its subcellular location is the nucleus. This is Ret finger protein-like 4A (RFPL4A) from Homo sapiens (Human).